The chain runs to 1023 residues: Hemolysin, chromosomal (1023 aa).

Transmembrane regions (helical) follow at residues 237 to 259 (IGAG…ILSN), 267 to 326 (KAAA…LSIA), and 364 to 410 (DASL…GILE). 2 N6-myristoyl lysine lipidation sites follow: Lys-563 and Lys-689. 6 Hemolysin-type calcium-binding repeats span residues 731-748 (FGSK…DDHI), 749-766 (EGND…NDTL), 767-784 (SGGN…NDKL), 785-802 (IGGA…DDEL), 815-832 (SGGK…ADLL), and 833-850 (DGGE…NDIY). Residues 747-763 (HIEGNDGNDRLYGDKGN) are compositionally biased toward basic and acidic residues. The segment at 747-780 (HIEGNDGNDRLYGDKGNDTLSGGNGDDQLYGGDG) is disordered.

This sequence belongs to the RTX prokaryotic toxin (TC 1.C.11) family. Myristoylated by HlyC; the toxin only becomes active when modified. Mainly myristoylated, while a minor fraction is acylated with pentadecanoyl (C15:0; 26%) and heptadecanoyl (C17:0; 6%) fatty acyl groups. Fatty acylation is involved in binding to host membranes and promotes the irreversible insertion of Hemolysin into the host cell membrane. Can be activated by both myristoylation and palmitoylation, but HlyC catalyzes lysine myristoylation.

The protein resides in the secreted. It is found in the host cell membrane. Its function is as follows. Bacterial hemolysins are exotoxins that attack blood cell membranes and cause cell rupture by forming a pore. The chain is Hemolysin, chromosomal from Escherichia coli.